The primary structure comprises 892 residues: E3 ubiquitin ligase PQT3-like (892 aa).

The DWNN domain maps to 3–76; the sequence is IYYKFKSARD…NTSVLIRRVP (74 aa). Residues 210–224 form a CCHC-type zinc finger; sequence CHRCNIPGHFIQHCP. Residue serine 285 is modified to Phosphoserine. Residues 295–333 form an RING-type; degenerate zinc finger; sequence CPLCKEVMKDAALTSKCCYKSFCDKCIRDHIISKSMCVC. Disordered stretches follow at residues 375–408, 459–493, and 623–892; these read DLES…NNND, TQAP…MQWN, and MLRK…RSRA. Serine 404 carries the phosphoserine modification. A compositionally biased stretch (basic and acidic residues) spans 623–644; the sequence is MLRKRENERRPEGGKMFRDGEN. Residues 647–666 show a composition bias toward polar residues; it reads MMMNNGTSASASSINPNKSR. The span at 674-692 shows a compositional bias: basic and acidic residues; the sequence is HDYDRRRRPEKRLSPEHPP. Positions 693 to 700 match the Nuclear localization signal motif; that stretch reads TRKNISPS. The segment covering 708–745 has biased composition (basic and acidic residues); the sequence is ERYPDERDRQRDRERSRHQDVDREHDRTRDRRDEDRSR. The segment covering 810–832 has biased composition (low complexity); sequence SSSSTSVTDPSASASAAAAVGTS. The residue at position 866 (serine 866) is a Phosphoserine. Basic and acidic residues predominate over residues 875-892; the sequence is SEDKLRYSKRGKGERSRA.

Its subcellular location is the nucleus. The enzyme catalyses S-ubiquitinyl-[E2 ubiquitin-conjugating enzyme]-L-cysteine + [acceptor protein]-L-lysine = [E2 ubiquitin-conjugating enzyme]-L-cysteine + N(6)-ubiquitinyl-[acceptor protein]-L-lysine.. This Arabidopsis thaliana (Mouse-ear cress) protein is E3 ubiquitin ligase PQT3-like.